A 268-amino-acid chain; its full sequence is Ribosomal RNA small subunit methyltransferase A (268 aa).

S-adenosyl-L-methionine-binding residues include asparagine 16, leucine 18, glycine 43, glutamate 64, aspartate 89, and asparagine 110.

The protein belongs to the class I-like SAM-binding methyltransferase superfamily. rRNA adenine N(6)-methyltransferase family. RsmA subfamily.

It is found in the cytoplasm. It carries out the reaction adenosine(1518)/adenosine(1519) in 16S rRNA + 4 S-adenosyl-L-methionine = N(6)-dimethyladenosine(1518)/N(6)-dimethyladenosine(1519) in 16S rRNA + 4 S-adenosyl-L-homocysteine + 4 H(+). Specifically dimethylates two adjacent adenosines (A1518 and A1519) in the loop of a conserved hairpin near the 3'-end of 16S rRNA in the 30S particle. May play a critical role in biogenesis of 30S subunits. In Pseudomonas syringae pv. tomato (strain ATCC BAA-871 / DC3000), this protein is Ribosomal RNA small subunit methyltransferase A.